The chain runs to 1147 residues: Putative ATP-dependent RNA helicase L377 (1147 aa).

In terms of domain architecture, Helicase ATP-binding spans 108–315; the sequence is INPNTPYRGL…VELINYLRPK (208 aa). 121–128 is a binding site for ATP; it reads WGTGVGKS. The DEAH box motif lies at 264–267; sequence DEAH.

The protein belongs to the DEAD box helicase family. DEAH subfamily.

It is found in the virion. It carries out the reaction ATP + H2O = ADP + phosphate + H(+). The protein is Putative ATP-dependent RNA helicase L377 of Acanthamoeba polyphaga (Amoeba).